The sequence spans 360 residues: Heme A synthase (360 aa).

A run of 9 helical transmembrane segments spans residues 29–49, 111–131, 139–159, 175–195, 210–230, 242–262, 269–289, 309–329, and 330–350; these read WLFAMAALVIAMVAVGGATRL, FLGRLIGFAFFLPLGWFWWTG, LGLLGLGVLGGLQGAVGWIMV, LAAHLTLASAIFAGLVWLAAG, LTALALPLLMLVQIALGGLVA, PLMDGAFIPPLSGLFAVTPWI, VALVQLNHRLAAYGLLAVAAL, AILGLVTAQAALGITTLLLAV, and PLWAGLAHQVTAMLVLGMAAV. Residue H276 participates in heme binding. Position 337 (H337) interacts with heme.

It belongs to the COX15/CtaA family. Type 2 subfamily. Interacts with CtaB. Heme b serves as cofactor.

It localises to the cell membrane. It carries out the reaction Fe(II)-heme o + 2 A + H2O = Fe(II)-heme a + 2 AH2. It functions in the pathway porphyrin-containing compound metabolism; heme A biosynthesis; heme A from heme O: step 1/1. Functionally, catalyzes the conversion of heme O to heme A by two successive hydroxylations of the methyl group at C8. The first hydroxylation forms heme I, the second hydroxylation results in an unstable dihydroxymethyl group, which spontaneously dehydrates, resulting in the formyl group of heme A. The sequence is that of Heme A synthase from Methylobacterium nodulans (strain LMG 21967 / CNCM I-2342 / ORS 2060).